We begin with the raw amino-acid sequence, 171 residues long: Calcium channel flower homolog (171 aa).

At 1–31 (MSGSVAAGAAAGPVPPAQEEGMTWWYRWLCR) the chain is on the cytoplasmic side. The chain crosses the membrane as a helical span at residues 32 to 52 (LAGVLGAVSCAISGLFNCVTI). Topologically, residues 53 to 56 (HPLN) are extracellular. A helical membrane pass occupies residues 57–77 (IAAGVWMIMNAFILLLCEAPF). The Cytoplasmic portion of the chain corresponds to 78 to 101 (CCQFVEFANTVAEKVDRLRSWQKA). Residues 102 to 122 (VFYCGMAIVPIVMSLTLTTLL) traverse the membrane as a helical segment. Residues 123-124 (GN) lie on the Extracellular side of the membrane. A helical membrane pass occupies residues 125-141 (AIAFATGVLYGLSALGK). The Cytoplasmic portion of the chain corresponds to 142–171 (KGDAISYARIQQQRQQADEEKLAETFEGEL).

The protein belongs to the calcium channel flower family. Interacts with adaptor protein complex 2 (AP-2). Expressed in calyces in the brain (at protein level). Detected in cultured hippocampal neurons (at protein level).

The protein resides in the cell membrane. The protein localises to the cytoplasmic vesicle. Its subcellular location is the secretory vesicle. It localises to the synaptic vesicle. It is found in the golgi apparatus. The protein resides in the vesicle. Transmembrane protein which mediates synaptic endocytosis and fitness-based cell culling. In response to different stimulus strengths, controls two major modes of synaptic vesicle (SV) retrieval in hippocampal neurons; Clathrin-mediated endocytosis (CME) in response to mild stimulation and activity-dependent bulk endocytosis (ADBE) in response to strong stimulation. In cytotoxic T-lymphoocytes (CTLs) facilitates calcium-dependent endocytosis of cytotoxic granules (CGs) at the immuno synapse. Different isoforms work as fitness fingerprints in 'loser' and 'winner' cells and thereby mediate win/lose decisions as part of the cell competition process. The protein is Calcium channel flower homolog (Cacfd1) of Rattus norvegicus (Rat).